Reading from the N-terminus, the 323-residue chain is Arginase (323 aa).

4 residues coordinate Mn(2+): H119, D142, H144, and D146. Substrate-binding positions include 144 to 148, 155 to 157, and D198; these read HADIN and SKN. Residues D247 and D249 each contribute to the Mn(2+) site. Substrate-binding residues include T261 and E292.

The protein belongs to the arginase family. As to quaternary structure, homotrimer. Mn(2+) is required as a cofactor.

The enzyme catalyses L-arginine + H2O = urea + L-ornithine. Its pathway is nitrogen metabolism; urea cycle; L-ornithine and urea from L-arginine: step 1/1. The polypeptide is Arginase (aru1) (Schizosaccharomyces pombe (strain 972 / ATCC 24843) (Fission yeast)).